The following is a 54-amino-acid chain: Large ribosomal subunit protein bL33 (54 aa).

Belongs to the bacterial ribosomal protein bL33 family.

In Rhodopirellula baltica (strain DSM 10527 / NCIMB 13988 / SH1), this protein is Large ribosomal subunit protein bL33.